We begin with the raw amino-acid sequence, 1171 residues long: ATP-dependent helicase/deoxyribonuclease subunit B (1171 aa).

Positions 1-343 (MSLRFVIGRA…LVAEENYRYR (343 aa)) constitute a UvrD-like helicase ATP-binding domain. Residue 8–15 (GRAGSGKS) coordinates ATP. Residues 281 to 587 (MEQPRFHSPA…QFANIPPSLD (307 aa)) enclose the UvrD-like helicase C-terminal domain. Residues cysteine 805, cysteine 1129, cysteine 1132, and cysteine 1138 each contribute to the [4Fe-4S] cluster site.

This sequence belongs to the helicase family. AddB/RexB type 1 subfamily. Heterodimer of AddA and AddB. Requires Mg(2+) as cofactor. [4Fe-4S] cluster serves as cofactor.

Its function is as follows. The heterodimer acts as both an ATP-dependent DNA helicase and an ATP-dependent, dual-direction single-stranded exonuclease. Recognizes the chi site generating a DNA molecule suitable for the initiation of homologous recombination. The AddB subunit has 5' -&gt; 3' nuclease activity but not helicase activity. The polypeptide is ATP-dependent helicase/deoxyribonuclease subunit B (Bacillus thuringiensis subsp. konkukian (strain 97-27)).